The primary structure comprises 404 residues: NADH-quinone oxidoreductase subunit D 2 (404 aa).

It belongs to the complex I 49 kDa subunit family. In terms of assembly, NDH-1 is composed of 14 different subunits. Subunits NuoB, C, D, E, F, and G constitute the peripheral sector of the complex.

It is found in the cell inner membrane. It catalyses the reaction a quinone + NADH + 5 H(+)(in) = a quinol + NAD(+) + 4 H(+)(out). NDH-1 shuttles electrons from NADH, via FMN and iron-sulfur (Fe-S) centers, to quinones in the respiratory chain. The immediate electron acceptor for the enzyme in this species is believed to be ubiquinone. Couples the redox reaction to proton translocation (for every two electrons transferred, four hydrogen ions are translocated across the cytoplasmic membrane), and thus conserves the redox energy in a proton gradient. The sequence is that of NADH-quinone oxidoreductase subunit D 2 from Rhizobium meliloti (strain 1021) (Ensifer meliloti).